Here is a 968-residue protein sequence, read N- to C-terminus: RNA polymerase-associated protein RapA (968 aa).

The Helicase ATP-binding domain occupies 164 to 334 (EVGQRHAPRV…FARLRLLDPD (171 aa)). Residue 177 to 184 (DEVGLGKT) participates in ATP binding. Positions 280 to 283 (DEAH) match the DEAH box motif. A Helicase C-terminal domain is found at 490 to 664 (RVEWLLNYLI…ATPSEQEGLD (175 aa)).

It belongs to the SNF2/RAD54 helicase family. RapA subfamily. In terms of assembly, interacts with the RNAP. Has a higher affinity for the core RNAP than for the holoenzyme. Its ATPase activity is stimulated by binding to RNAP.

Functionally, transcription regulator that activates transcription by stimulating RNA polymerase (RNAP) recycling in case of stress conditions such as supercoiled DNA or high salt concentrations. Probably acts by releasing the RNAP, when it is trapped or immobilized on tightly supercoiled DNA. Does not activate transcription on linear DNA. Probably not involved in DNA repair. This is RNA polymerase-associated protein RapA from Yersinia enterocolitica serotype O:8 / biotype 1B (strain NCTC 13174 / 8081).